The following is a 275-amino-acid chain: 3-methyl-2-oxobutanoate hydroxymethyltransferase (275 aa).

2 residues coordinate Mg(2+): aspartate 51 and aspartate 90. 3-methyl-2-oxobutanoate contacts are provided by residues aspartate 51–serine 52, aspartate 90, and lysine 120. Glutamate 122 serves as a coordination point for Mg(2+). The active-site Proton acceptor is the glutamate 189.

The protein belongs to the PanB family. As to quaternary structure, homodecamer; pentamer of dimers. It depends on Mg(2+) as a cofactor.

Its subcellular location is the cytoplasm. It catalyses the reaction 3-methyl-2-oxobutanoate + (6R)-5,10-methylene-5,6,7,8-tetrahydrofolate + H2O = 2-dehydropantoate + (6S)-5,6,7,8-tetrahydrofolate. It functions in the pathway cofactor biosynthesis; (R)-pantothenate biosynthesis; (R)-pantoate from 3-methyl-2-oxobutanoate: step 1/2. In terms of biological role, catalyzes the reversible reaction in which hydroxymethyl group from 5,10-methylenetetrahydrofolate is transferred onto alpha-ketoisovalerate to form ketopantoate. In Phenylobacterium zucineum (strain HLK1), this protein is 3-methyl-2-oxobutanoate hydroxymethyltransferase.